A 492-amino-acid polypeptide reads, in one-letter code: 2,3-bisphosphoglycerate-independent phosphoglycerate mutase (492 aa).

Residues Asp-11 and Ser-61 each contribute to the Mn(2+) site. Ser-61 serves as the catalytic Phosphoserine intermediate. Residues His-118, 147-148, Arg-178, Arg-184, 248-251, and Lys-320 each bind substrate; these read RD and RNDR. Asp-386, His-390, Asp-427, His-428, and His-445 together coordinate Mn(2+).

Belongs to the BPG-independent phosphoglycerate mutase family. In terms of assembly, monomer. Mn(2+) serves as cofactor.

It carries out the reaction (2R)-2-phosphoglycerate = (2R)-3-phosphoglycerate. It participates in carbohydrate degradation; glycolysis; pyruvate from D-glyceraldehyde 3-phosphate: step 3/5. Functionally, catalyzes the interconversion of 2-phosphoglycerate and 3-phosphoglycerate. This chain is 2,3-bisphosphoglycerate-independent phosphoglycerate mutase, found in Campylobacter jejuni subsp. jejuni serotype O:23/36 (strain 81-176).